A 465-amino-acid polypeptide reads, in one-letter code: Alpha-2A adrenergic receptor (465 aa).

Topologically, residues 1–48 (MFRQEQPLAEGSFAPMGSLQPEAGNASWNGTEAPGGGARATPYSLQVT) are extracellular. N-linked (GlcNAc...) asparagine glycosylation is found at Asn-25 and Asn-29. The helical transmembrane segment at 49–74 (LTLVCLAGLLMLFTVFGNVLVIIAVF) threads the bilayer. The Cytoplasmic portion of the chain corresponds to 75-85 (TSRALKAPQNL). Residues 86 to 111 (FLVSLASADILVATLVIPFSLANEVM) form a helical membrane-spanning segment. Residues 112–121 (GYWYFGKAWC) lie on the Extracellular side of the membrane. An intrachain disulfide couples Cys-121 to Cys-203. Residues 122–144 (EIYLALDVLFCTSSIVHLCAISL) traverse the membrane as a helical segment. The Cytoplasmic portion of the chain corresponds to 145-164 (DRYWSITQAIEYNLKRTPRR). A helical transmembrane segment spans residues 165–188 (IKAIIVTVWVISAVISFPPLISIE). The Extracellular segment spans residues 189 to 207 (KKAGGGGQQPAEPRCEIND). The chain crosses the membrane as a helical span at residues 208–232 (QKWYVISSCIGSFFAPCLIMILVYV). Residues 233–389 (RIYQIAKRRT…RQNREKRFTF (157 aa)) lie on the Cytoplasmic side of the membrane. The interval 242 to 377 (TRVPPSRRGP…RGGVAKASRW (136 aa)) is disordered. Residues 313 to 330 (SSEHAERPPGPRRSERGP) show a composition bias toward basic and acidic residues. At Ser-346 the chain carries Phosphoserine. Arg-368 is modified (omega-N-methylarginine). The helical transmembrane segment at 390-414 (VLAVVIGVFVVCWFPFFFTYTLTAV) threads the bilayer. Over 415-424 (GCSVPPTLFK) the chain is Extracellular. Residues 425–445 (FFFWFGYCNSSLNPVIYTIFN) form a helical membrane-spanning segment. Over 446–465 (HDFRRAFKKILCRGDRKRIV) the chain is Cytoplasmic. Residue Cys-457 is the site of S-palmitoyl cysteine attachment.

The protein belongs to the G-protein coupled receptor 1 family. Adrenergic receptor subfamily. ADRA2A sub-subfamily.

It localises to the cell membrane. Functionally, alpha-2 adrenergic receptors mediate the catecholamine-induced inhibition of adenylate cyclase through the action of G proteins. This chain is Alpha-2A adrenergic receptor, found in Sus scrofa (Pig).